We begin with the raw amino-acid sequence, 197 residues long: Imidazoleglycerol-phosphate dehydratase (197 aa).

It belongs to the imidazoleglycerol-phosphate dehydratase family.

It is found in the cytoplasm. It catalyses the reaction D-erythro-1-(imidazol-4-yl)glycerol 3-phosphate = 3-(imidazol-4-yl)-2-oxopropyl phosphate + H2O. Its pathway is amino-acid biosynthesis; L-histidine biosynthesis; L-histidine from 5-phospho-alpha-D-ribose 1-diphosphate: step 6/9. The polypeptide is Imidazoleglycerol-phosphate dehydratase (Rhodopseudomonas palustris (strain ATCC BAA-98 / CGA009)).